The following is a 77-amino-acid chain: Apidermin 2 (77 aa).

The signal sequence occupies residues 1 to 16 (MKSLLILFAIVAVVAA).

In terms of tissue distribution, expressed in the epidermis, hypopharyngeal glands, fat body, trachea, esophagus and stomach.

It is found in the secreted. In terms of biological role, antimicrobial peptide that binds cell wall carbohydrates of microbial symbionts and induces structural damage. Binds the cell wall carbohydrates mannan, N-acetyl-D-glucosamine and lipopolysaccharide. Can target fungi, Gram-negative and Gram-positive bacteria. The polypeptide is Apidermin 2 (Apis mellifera (Honeybee)).